A 297-amino-acid polypeptide reads, in one-letter code: tRNA-cytidine(32) 2-sulfurtransferase (297 aa).

Residues 45-50 (SGGKDS) carry the PP-loop motif motif. Residues cysteine 120, cysteine 123, and cysteine 211 each contribute to the [4Fe-4S] cluster site.

Belongs to the TtcA family. Homodimer. Requires Mg(2+) as cofactor. [4Fe-4S] cluster is required as a cofactor.

It localises to the cytoplasm. It carries out the reaction cytidine(32) in tRNA + S-sulfanyl-L-cysteinyl-[cysteine desulfurase] + AH2 + ATP = 2-thiocytidine(32) in tRNA + L-cysteinyl-[cysteine desulfurase] + A + AMP + diphosphate + H(+). It functions in the pathway tRNA modification. Catalyzes the ATP-dependent 2-thiolation of cytidine in position 32 of tRNA, to form 2-thiocytidine (s(2)C32). The sulfur atoms are provided by the cysteine/cysteine desulfurase (IscS) system. In Vibrio parahaemolyticus serotype O3:K6 (strain RIMD 2210633), this protein is tRNA-cytidine(32) 2-sulfurtransferase.